The sequence spans 262 residues: Acyl-[acyl-carrier-protein]--UDP-N-acetylglucosamine O-acyltransferase (262 aa).

It belongs to the transferase hexapeptide repeat family. LpxA subfamily. As to quaternary structure, homotrimer.

It localises to the cytoplasm. It catalyses the reaction a (3R)-hydroxyacyl-[ACP] + UDP-N-acetyl-alpha-D-glucosamine = a UDP-3-O-[(3R)-3-hydroxyacyl]-N-acetyl-alpha-D-glucosamine + holo-[ACP]. It participates in glycolipid biosynthesis; lipid IV(A) biosynthesis; lipid IV(A) from (3R)-3-hydroxytetradecanoyl-[acyl-carrier-protein] and UDP-N-acetyl-alpha-D-glucosamine: step 1/6. Its function is as follows. Involved in the biosynthesis of lipid A, a phosphorylated glycolipid that anchors the lipopolysaccharide to the outer membrane of the cell. The protein is Acyl-[acyl-carrier-protein]--UDP-N-acetylglucosamine O-acyltransferase of Klebsiella pneumoniae (strain 342).